Consider the following 325-residue polypeptide: Fructose-1,6-bisphosphatase class 1 (325 aa).

Mg(2+) is bound by residues Glu-84, Asp-103, Leu-105, and Asp-106. Substrate contacts are provided by residues 106-109 (DGSS), Asn-196, and Lys-262. Glu-268 contacts Mg(2+).

This sequence belongs to the FBPase class 1 family. Homotetramer. Requires Mg(2+) as cofactor.

It is found in the cytoplasm. It catalyses the reaction beta-D-fructose 1,6-bisphosphate + H2O = beta-D-fructose 6-phosphate + phosphate. It participates in carbohydrate biosynthesis; gluconeogenesis. The sequence is that of Fructose-1,6-bisphosphatase class 1 from Shewanella oneidensis (strain ATCC 700550 / JCM 31522 / CIP 106686 / LMG 19005 / NCIMB 14063 / MR-1).